A 675-amino-acid polypeptide reads, in one-letter code: G-protein-signaling modulator 1 (675 aa).

Positions 1–509 (MAGPAPPVAD…DLLTKFQSSR (509 aa)) are mediates association with membranes. TPR repeat units lie at residues 28–61 (CLEL…GTED), 66–99 (SAIY…ARTI), 106–139 (AKAS…AQEQ), 146–181 (ARAL…PPDV), 183–202 (ETLC…VKEL), 209–242 (GRAY…AKEF), 249–282 (RRAY…SRQL), 289–322 (AQAC…AQEL), and 329–362 (GRAC…SQEI). Positions 364–487 (DRHGELTARM…VRVHVPRTSI (124 aa)) are interaction with STK11/LKB1. The disordered stretch occupies residues 391–412 (SEKPDLAGYEAQGARPKRTQRL). Ser-413 carries the phosphoserine modification. Omega-N-methylarginine is present on Arg-421. Over residues 424–442 (LEREQNGDSHHSGDWRGPS) the composition is skewed to basic and acidic residues. Residues 424 to 492 (LEREQNGDSH…PRTSIPRAPS (69 aa)) form a disordered region. Phosphoserine occurs at positions 445, 469, 471, 492, and 493. Over residues 454-469 (KYQEGPDAERRPREGS) the composition is skewed to basic and acidic residues. In terms of domain architecture, GoLoco 1 spans 495–517 (EECFFDLLTKFQSSRMDDQRCPL). A phosphoserine mark is found at Ser-545 and Ser-569. GoLoco domains are found at residues 548–570 (TEEF…RASV), 596–618 (GDDF…RCPP), and 630–652 (DEDF…RVDL). 2 disordered regions span residues 610-630 (RIDD…TMPD) and 644-675 (RMDE…PGAS).

This sequence belongs to the GPSM family. Interacts with GNAI1, GNAI2 and GNAI3 preferentially in their GDP-bound state. May also interact with GNAO1. Interacts with STK11/LKB1 and MACF1. Interacts with INSC/inscuteable and FRMPD1. Phosphorylation regulates interaction with G(i/o) alpha. In terms of tissue distribution, expressed in intestinal cells.

It localises to the cytoplasm. It is found in the cytosol. The protein localises to the endoplasmic reticulum membrane. Its subcellular location is the golgi apparatus membrane. The protein resides in the cell membrane. Its function is as follows. Guanine nucleotide dissociation inhibitor (GDI) which functions as a receptor-independent activator of heterotrimeric G-protein signaling. Keeps G(i/o) alpha subunit in its GDP-bound form thus uncoupling heterotrimeric G-proteins signaling from G protein-coupled receptors. Controls spindle orientation and asymmetric cell fate of cerebral cortical progenitors. May also be involved in macroautophagy in intestinal cells. May play a role in drug addiction. This is G-protein-signaling modulator 1 (GPSM1) from Homo sapiens (Human).